Reading from the N-terminus, the 78-residue chain is Protein SlyX homolog (78 aa).

Belongs to the SlyX family.

This chain is Protein SlyX homolog, found in Xanthomonas campestris pv. campestris (strain 8004).